Consider the following 131-residue polypeptide: Small ribosomal subunit protein uS8 (131 aa).

The protein belongs to the universal ribosomal protein uS8 family. Part of the 30S ribosomal subunit. Contacts proteins S5 and S12.

Its function is as follows. One of the primary rRNA binding proteins, it binds directly to 16S rRNA central domain where it helps coordinate assembly of the platform of the 30S subunit. This is Small ribosomal subunit protein uS8 from Acidovorax sp. (strain JS42).